A 456-amino-acid chain; its full sequence is GTPase Der (456 aa).

EngA-type G domains lie at 4 to 169 (PIVA…PSKE) and 178 to 353 (IQLA…EQHR). Residues 10 to 17 (GRPNVGKS), 57 to 61 (DTGGL), 120 to 123 (NKCE), 184 to 191 (GRPNVGKS), 231 to 235 (DTAGI), and 296 to 299 (NKWD) each bind GTP. The 86-residue stretch at 354-439 (RRVSTSVVNE…PLKLFWRGKQ (86 aa)) folds into the KH-like domain.

Belongs to the TRAFAC class TrmE-Era-EngA-EngB-Septin-like GTPase superfamily. EngA (Der) GTPase family. In terms of assembly, associates with the 50S ribosomal subunit.

GTPase that plays an essential role in the late steps of ribosome biogenesis. This chain is GTPase Der, found in Prochlorococcus marinus (strain MIT 9211).